A 1167-amino-acid polypeptide reads, in one-letter code: RNA-directed RNA polymerase (1167 aa).

Positions Leu-553–Glu-735 constitute a RdRp catalytic domain.

Belongs to the reoviridae RNA-directed RNA polymerase family. As to quaternary structure, interacts with VP3 (Potential). Interacts with VP2 (Potential). Interacts with NSP5; this interaction is probably necessary for the formation of functional virus factories.

It localises to the virion. It carries out the reaction RNA(n) + a ribonucleoside 5'-triphosphate = RNA(n+1) + diphosphate. In terms of biological role, RNA-directed RNA polymerase that is involved in both transcription and genome replication. Together with VP3 capping enzyme, forms an enzyme complex positioned near the channels situated at each of the five-fold vertices of the core. Following infection, the outermost layer of the virus is lost, leaving a double-layered particle (DLP) made up of the core and VP6 shell. VP1 then catalyzes the transcription of fully conservative plus-strand genomic RNAs that are extruded through the DLP's channels into the cytoplasm where they function as mRNAs for translation of viral proteins. One copy of each of the viral (+)RNAs is also recruited during core assembly, together with newly synthesized polymerase complexes and VP2. The polymerase of these novo-formed particles catalyzes the synthesis of complementary minus-strands leading to dsDNA formation. To do so, the polymerase specifically recognizes conserved 3' sequence(s) in plus-strand RNA templates. Once dsRNA synthesis is complete, the polymerase switches to the transcriptional mode, thus providing secondary transcription. The polypeptide is RNA-directed RNA polymerase (Rotavirus X (strain RVX/Human/China/NADRV-J19/1997/GXP[X]) (RV ADRV-N)).